The primary structure comprises 1493 residues: Inactive serine/threonine-protein kinase TEX14 (1493 aa).

ANK repeat units follow at residues 27–54 (LHEYVKQGNYVKVKRILKKGIYVDAVNS), 55–84 (LGQTALFIAALLGLTKLVDVLVDYGADPNH), and 88–117 (DGSTPVHAAAFSGNQWILSKLLDAGGDLRL). In terms of domain architecture, Protein kinase spans 198–511 (VISAQNIYSF…IMKNDLKDFI (314 aa)). ATP-binding positions include 204-212 (IYSFGFGKF) and lysine 266. Position 430 is a phosphoserine; by PLK1 (serine 430). Polar residues predominate over residues 559-573 (GSQFHSPRGHSSPTG). The disordered stretch occupies residues 559 to 615 (GSQFHSPRGHSSPTGKATPEPPVPDVSPVAQQTHRQDAASPACSVAEEARNPSPDQT). Phosphoserine occurs at positions 560 and 660. Disordered stretches follow at residues 782–904 (HDSP…RISM) and 940–1081 (AATG…LTPD). A GPPX3Y motif is present at residues 789 to 795 (GPPASSY). The short motif at 846 to 854 (KASLERDRN) is the D-box element. 2 stretches are compositionally biased toward polar residues: residues 855–904 (QNTS…RISM) and 1001–1020 (CGQTDSSDQRGRQSGPQRFT). The segment covering 1026-1037 (PPREDEQPEHSE) has biased composition (basic and acidic residues). The segment covering 1053–1064 (YSGQSAQSTCSP) has biased composition (polar residues). A compositionally biased stretch (acidic residues) spans 1066 to 1075 (SSEDTEDMTD). Serine 1100 is modified (phosphoserine). Residues 1115–1167 (RPQASGEEKFQMRKNLGKNSEILTKSQFQPIRSPEGEQDETLKEPPKEVKEKD) are disordered. Polar residues predominate over residues 1131 to 1144 (GKNSEILTKSQFQP). Residues 1154–1167 (ETLKEPPKEVKEKD) are compositionally biased toward basic and acidic residues. Residue serine 1262 is modified to Phosphoserine. Disordered stretches follow at residues 1288–1307 (GAGSSSIAKAPDTSRCATQR) and 1341–1466 (KGQQ…EEEE). Positions 1343–1362 (QQVSSTALDENTASRPGSTE) are enriched in polar residues. Over residues 1363-1380 (NDQRHLEEQETHSNKEDS) the composition is skewed to basic and acidic residues. At serine 1400 the chain carries Phosphoserine. The segment covering 1426 to 1456 (PAREASSKDQEVGEKKRKGEESTKPEKRKPE) has biased composition (basic and acidic residues). Position 1492 is a phosphoserine (serine 1492).

The protein belongs to the protein kinase superfamily. Interacts with KIF23 and RBM44. Interacts with CEP55; inhibiting interaction between CEP55 and PDCD6IP/ALIX and TSG101. In terms of processing, phosphorylated on Thr residues by CDK1 during early phases of mitosis, promoting the interaction with PLK1 and recruitment to kinetochores. Phosphorylated on Ser-430 by PLK1 during late prometaphase promotes the rapid depletion from kinetochores and its subsequent degradation by the APC/C complex.

It localises to the cytoplasm. Its subcellular location is the midbody. It is found in the chromosome. The protein localises to the centromere. The protein resides in the kinetochore. Functionally, required both for the formation of intercellular bridges during meiosis and for kinetochore-microtubule attachment during mitosis. Intercellular bridges are evolutionarily conserved structures that connect differentiating germ cells and are required for spermatogenesis and male fertility. Acts by promoting the conversion of midbodies into intercellular bridges via its interaction with CEP55: interaction with CEP55 inhibits the interaction between CEP55 and PDCD6IP/ALIX and TSG101, blocking cell abscission and leading to transform midbodies into intercellular bridges. Also plays a role during mitosis: recruited to kinetochores by PLK1 during early mitosis and regulates the maturation of the outer kinetochores and microtubule attachment. Has no protein kinase activity in vitro. In Bos taurus (Bovine), this protein is Inactive serine/threonine-protein kinase TEX14 (TEX14).